Consider the following 167-residue polypeptide: S-ribosylhomocysteine lyase (167 aa).

3 residues coordinate Fe cation: His-54, His-58, and Cys-128.

It belongs to the LuxS family. As to quaternary structure, homodimer. Fe cation is required as a cofactor.

It carries out the reaction S-(5-deoxy-D-ribos-5-yl)-L-homocysteine = (S)-4,5-dihydroxypentane-2,3-dione + L-homocysteine. In terms of biological role, involved in the synthesis of autoinducer 2 (AI-2) which is secreted by bacteria and is used to communicate both the cell density and the metabolic potential of the environment. The regulation of gene expression in response to changes in cell density is called quorum sensing. Catalyzes the transformation of S-ribosylhomocysteine (RHC) to homocysteine (HC) and 4,5-dihydroxy-2,3-pentadione (DPD). The polypeptide is S-ribosylhomocysteine lyase (Haemophilus influenzae (strain PittEE)).